The chain runs to 233 residues: Large ribosomal subunit protein uL1 (233 aa).

The protein belongs to the universal ribosomal protein uL1 family. As to quaternary structure, part of the 50S ribosomal subunit.

Its function is as follows. Binds directly to 23S rRNA. The L1 stalk is quite mobile in the ribosome, and is involved in E site tRNA release. In terms of biological role, protein L1 is also a translational repressor protein, it controls the translation of the L11 operon by binding to its mRNA. This chain is Large ribosomal subunit protein uL1, found in Geotalea daltonii (strain DSM 22248 / JCM 15807 / FRC-32) (Geobacter daltonii).